The following is a 299-amino-acid chain: tRNA dimethylallyltransferase (299 aa).

10-17 (GPTAVGKT) contributes to the ATP binding site. 12–17 (TAVGKT) provides a ligand contact to substrate. The tract at residues 35–38 (DSQQ) is interaction with substrate tRNA.

Belongs to the IPP transferase family. In terms of assembly, monomer. Requires Mg(2+) as cofactor.

It catalyses the reaction adenosine(37) in tRNA + dimethylallyl diphosphate = N(6)-dimethylallyladenosine(37) in tRNA + diphosphate. Functionally, catalyzes the transfer of a dimethylallyl group onto the adenine at position 37 in tRNAs that read codons beginning with uridine, leading to the formation of N6-(dimethylallyl)adenosine (i(6)A). In Streptococcus thermophilus (strain ATCC BAA-491 / LMD-9), this protein is tRNA dimethylallyltransferase.